Here is a 202-residue protein sequence, read N- to C-terminus: MSRYRGPRLRVTRRLGELPGLTRKASKKSNPPGQHGQARRKRSEYAIRLEEKQKLRFNYGVSEKQLVRYVKKARAQEGSTGTNLLRLLENRLDNVCFRLGFGGTIPGSRQLVNHGHVTVNGKVLDIAGYQCKSGDVIGIKENKASKKLVEGNIEFPGLANVPPHLDLDKPKLTGKITGKCDREWVALEINELLVVEYYSRKV.

Over residues 1–13 (MSRYRGPRLRVTR) the composition is skewed to basic residues. A disordered region spans residues 1 to 42 (MSRYRGPRLRVTRRLGELPGLTRKASKKSNPPGQHGQARRKR). The S4 RNA-binding domain occupies 90–152 (NRLDNVCFRL…KASKKLVEGN (63 aa)).

The protein belongs to the universal ribosomal protein uS4 family. As to quaternary structure, part of the 30S ribosomal subunit. Contacts protein S5. The interaction surface between S4 and S5 is involved in control of translational fidelity.

Functionally, one of the primary rRNA binding proteins, it binds directly to 16S rRNA where it nucleates assembly of the body of the 30S subunit. Its function is as follows. With S5 and S12 plays an important role in translational accuracy. The protein is Small ribosomal subunit protein uS4 of Prochlorococcus marinus (strain MIT 9312).